A 129-amino-acid chain; its full sequence is Serum amyloid A-4 protein (129 aa).

The signal sequence occupies residues 1–18 (MKLLIGILFCTLIMGVTG). Over residues 107–121 (AEEWGRSGQDPDHFR) the composition is skewed to basic and acidic residues. Positions 107–129 (AEEWGRSGQDPDHFRPAGLPKKY) are disordered.

This sequence belongs to the SAA family. As to quaternary structure, apolipoprotein of the HDL complex.

The protein resides in the secreted. Functionally, major acute phase reactant. The polypeptide is Serum amyloid A-4 protein (Bos taurus (Bovine)).